The chain runs to 69 residues: Small ribosomal subunit protein uS14 (69 aa).

4 residues coordinate Zn(2+): cysteine 33, cysteine 36, cysteine 51, and cysteine 54.

This sequence belongs to the universal ribosomal protein uS14 family. Zinc-binding uS14 subfamily. In terms of assembly, part of the 30S ribosomal subunit. Zn(2+) is required as a cofactor.

Binds 16S rRNA, required for the assembly of 30S particles. In Nanoarchaeum equitans (strain Kin4-M), this protein is Small ribosomal subunit protein uS14.